A 516-amino-acid chain; its full sequence is uncharacterized protein (516 aa).

This is an uncharacterized protein from Azotobacter chroococcum mcd 1.